The following is an 89-amino-acid chain: Mitochondrial import inner membrane translocase subunit Tim9 (89 aa).

A2 carries the N-acetylalanine modification. Positions 28–52 (CFLDCVKDFTTREVKPEETTCSEHC) match the Twin CX3C motif motif. 2 disulfide bridges follow: C28-C52 and C32-C48.

It belongs to the small Tim family. As to quaternary structure, heterohexamer; composed of 3 copies of TIMM9 and 3 copies of TIMM10/TIM10A, named soluble 70 kDa complex. The complex forms a 6-bladed alpha-propeller structure and associates with the TIMM22 component of the TIM22 complex. Interacts with multi-pass transmembrane proteins in transit. Also forms a complex composed of TIMM9, TIMM10/TIM10A and FXC1/TIM10B. In terms of tissue distribution, ubiquitous, with highest expression in heart, kidney, liver and skeletal muscle.

Its subcellular location is the mitochondrion inner membrane. In terms of biological role, mitochondrial intermembrane chaperone that participates in the import and insertion of multi-pass transmembrane proteins into the mitochondrial inner membrane. May also be required for the transfer of beta-barrel precursors from the TOM complex to the sorting and assembly machinery (SAM complex) of the outer membrane. Acts as a chaperone-like protein that protects the hydrophobic precursors from aggregation and guide them through the mitochondrial intermembrane space. In Homo sapiens (Human), this protein is Mitochondrial import inner membrane translocase subunit Tim9 (TIMM9).